We begin with the raw amino-acid sequence, 438 residues long: Aspartate--tRNA(Asp/Asn) ligase (438 aa).

L-aspartate is bound at residue glutamate 176. The tract at residues 198–201 is aspartate; sequence QLYK. Arginine 220 is a binding site for L-aspartate. Residues 220–222, 228–230, and glutamate 361 each bind ATP; these read RAE and RHL. Glutamate 361 and serine 364 together coordinate Mg(2+). L-aspartate-binding residues include serine 364 and arginine 368. 409–412 is a binding site for ATP; that stretch reads GADR.

Belongs to the class-II aminoacyl-tRNA synthetase family. Type 2 subfamily. As to quaternary structure, homodimer. Mg(2+) is required as a cofactor.

The protein localises to the cytoplasm. The catalysed reaction is tRNA(Asx) + L-aspartate + ATP = L-aspartyl-tRNA(Asx) + AMP + diphosphate. Its function is as follows. Aspartyl-tRNA synthetase with relaxed tRNA specificity since it is able to aspartylate not only its cognate tRNA(Asp) but also tRNA(Asn). Reaction proceeds in two steps: L-aspartate is first activated by ATP to form Asp-AMP and then transferred to the acceptor end of tRNA(Asp/Asn). This chain is Aspartate--tRNA(Asp/Asn) ligase, found in Methanococcus maripaludis (strain C7 / ATCC BAA-1331).